The chain runs to 194 residues: Peptidyl-tRNA hydrolase (194 aa).

TRNA is bound at residue Tyr-16. The active-site Proton acceptor is His-21. TRNA-binding residues include Phe-67, Asn-69, and Asn-115.

The protein belongs to the PTH family. Monomer.

It localises to the cytoplasm. The enzyme catalyses an N-acyl-L-alpha-aminoacyl-tRNA + H2O = an N-acyl-L-amino acid + a tRNA + H(+). Functionally, hydrolyzes ribosome-free peptidyl-tRNAs (with 1 or more amino acids incorporated), which drop off the ribosome during protein synthesis, or as a result of ribosome stalling. In terms of biological role, catalyzes the release of premature peptidyl moieties from peptidyl-tRNA molecules trapped in stalled 50S ribosomal subunits, and thus maintains levels of free tRNAs and 50S ribosomes. The polypeptide is Peptidyl-tRNA hydrolase (Citrobacter koseri (strain ATCC BAA-895 / CDC 4225-83 / SGSC4696)).